The chain runs to 612 residues: Sulfite reductase [NADPH] hemoprotein beta-component (612 aa).

Residues 1-32 (MDDHKPIDTPDGPAVDTPGIGAHRYEAPPTDR) are disordered. Cys469, Cys475, Cys514, and Cys518 together coordinate [4Fe-4S] cluster. A siroheme-binding site is contributed by Cys518.

It belongs to the nitrite and sulfite reductase 4Fe-4S domain family. In terms of assembly, alpha(8)-beta(8). The alpha component is a flavoprotein, the beta component is a hemoprotein. Siroheme serves as cofactor. [4Fe-4S] cluster is required as a cofactor.

It catalyses the reaction hydrogen sulfide + 3 NADP(+) + 3 H2O = sulfite + 3 NADPH + 4 H(+). It participates in sulfur metabolism; hydrogen sulfide biosynthesis; hydrogen sulfide from sulfite (NADPH route): step 1/1. In terms of biological role, component of the sulfite reductase complex that catalyzes the 6-electron reduction of sulfite to sulfide. This is one of several activities required for the biosynthesis of L-cysteine from sulfate. This Methylorubrum populi (strain ATCC BAA-705 / NCIMB 13946 / BJ001) (Methylobacterium populi) protein is Sulfite reductase [NADPH] hemoprotein beta-component.